Reading from the N-terminus, the 361-residue chain is Histidinol-phosphate aminotransferase (361 aa).

The residue at position 218 (Lys-218) is an N6-(pyridoxal phosphate)lysine.

It belongs to the class-II pyridoxal-phosphate-dependent aminotransferase family. Histidinol-phosphate aminotransferase subfamily. In terms of assembly, homodimer. Requires pyridoxal 5'-phosphate as cofactor.

The catalysed reaction is L-histidinol phosphate + 2-oxoglutarate = 3-(imidazol-4-yl)-2-oxopropyl phosphate + L-glutamate. Its pathway is amino-acid biosynthesis; L-histidine biosynthesis; L-histidine from 5-phospho-alpha-D-ribose 1-diphosphate: step 7/9. The sequence is that of Histidinol-phosphate aminotransferase from Dinoroseobacter shibae (strain DSM 16493 / NCIMB 14021 / DFL 12).